We begin with the raw amino-acid sequence, 492 residues long: Putative protein disulfide-isomerase C1F5.02 (492 aa).

Positions 1–22 (MKISNLLAAFLAFSGGFFCASA) are cleaved as a signal peptide. The 106-residue stretch at 23–128 (EVPKVNKEGL…LVKYMRKQLL (106 aa)) folds into the Thioredoxin 1 domain. Catalysis depends on nucleophile residues cysteine 51 and cysteine 54. Cysteine 51 and cysteine 54 are oxidised to a cystine. N-linked (GlcNAc...) asparagine glycans are attached at residues asparagine 161 and asparagine 257. Residues 323–462 (ELTAKAMTKF…LSAFIDKHAS (140 aa)) enclose the Thioredoxin 2 domain. Active-site nucleophile residues include cysteine 385 and cysteine 388. Cysteines 385 and 388 form a disulfide. Positions 468-492 (KEKESVPAPDLEDQVAVEDEMADEL) are disordered. Over residues 477–492 (DLEDQVAVEDEMADEL) the composition is skewed to acidic residues. The Prevents secretion from ER signature appears at 489 to 492 (ADEL).

This sequence belongs to the protein disulfide isomerase family.

It is found in the endoplasmic reticulum lumen. The catalysed reaction is Catalyzes the rearrangement of -S-S- bonds in proteins.. Participates in the folding of proteins containing disulfide bonds, may be involved in glycosylation, prolyl hydroxylation and triglyceride transfer. This Schizosaccharomyces pombe (strain 972 / ATCC 24843) (Fission yeast) protein is Putative protein disulfide-isomerase C1F5.02.